Reading from the N-terminus, the 350-residue chain is Arabinogalactan endo-beta-1,4-galactanase (350 aa).

Residues 1-16 form the signal peptide; sequence MFASLLLAALPLLTHA. Asn-128 is a glycosylation site (N-linked (GlcNAc...) asparagine). The active-site Proton donor is Glu-152. Glu-262 acts as the Nucleophile in catalysis.

This sequence belongs to the glycosyl hydrolase 53 family. Glycosylated.

The catalysed reaction is The enzyme specifically hydrolyzes (1-&gt;4)-beta-D-galactosidic linkages in type I arabinogalactans.. This chain is Arabinogalactan endo-beta-1,4-galactanase (gal1), found in Aspergillus aculeatus.